The chain runs to 128 residues: Large ribosomal subunit protein bL17 (128 aa).

This sequence belongs to the bacterial ribosomal protein bL17 family. Part of the 50S ribosomal subunit. Contacts protein L32.

The sequence is that of Large ribosomal subunit protein bL17 from Enterobacter sp. (strain 638).